Here is a 214-residue protein sequence, read N- to C-terminus: MIALELSVPVACWRKGRARELVETEVLPPPATCYGALLSLVGEQDRERHRGCRVTAGVLNAPVISTVLRTFWRSKNLKVAKGNDENAAPDQQQLVIDARLVVWCDSREEPDSGESLEDRVVRAMREPGSVTRAGGWSLGESTHLINDARLLPEGRPPAGCRAFLTASTGALTLPVWVDHVGTRGTRYEVGRLEEVLAAPEVQRLPRIPLAEGAG.

It belongs to the CRISPR-associated protein Cas5 family.

Functionally, CRISPR (clustered regularly interspaced short palindromic repeat) is an adaptive immune system that provides protection against mobile genetic elements (viruses, transposable elements and conjugative plasmids). CRISPR clusters contain spacers, sequences complementary to antecedent mobile elements, and target invading nucleic acids. CRISPR clusters are transcribed and processed into CRISPR RNA (crRNA). Its function is as follows. Has a role in fruiting body development, sporulation and aggregation. The sequence is that of CRISPR-associated protein Cas5 (devS) from Myxococcus xanthus (strain DK1622).